The following is a 281-amino-acid chain: 4-diphosphocytidyl-2-C-methyl-D-erythritol kinase (281 aa).

Lysine 15 is an active-site residue. 98–108 (PTGAGLGGGSS) provides a ligand contact to ATP. Aspartate 140 is a catalytic residue.

It belongs to the GHMP kinase family. IspE subfamily.

The catalysed reaction is 4-CDP-2-C-methyl-D-erythritol + ATP = 4-CDP-2-C-methyl-D-erythritol 2-phosphate + ADP + H(+). It participates in isoprenoid biosynthesis; isopentenyl diphosphate biosynthesis via DXP pathway; isopentenyl diphosphate from 1-deoxy-D-xylulose 5-phosphate: step 3/6. Functionally, catalyzes the phosphorylation of the position 2 hydroxy group of 4-diphosphocytidyl-2C-methyl-D-erythritol. The chain is 4-diphosphocytidyl-2-C-methyl-D-erythritol kinase from Neisseria meningitidis serogroup B (strain ATCC BAA-335 / MC58).